Consider the following 329-residue polypeptide: HTH-type transcriptional regulator ArgR (329 aa).

One can recognise an HTH araC/xylS-type domain in the interval 214 to 312 (TQAVLLMEAN…GVTPREDRNQ (99 aa)). 2 DNA-binding regions (H-T-H motif) span residues 231–252 (DEIA…KQYL) and 279–302 (IIQI…RNFF). The disordered stretch occupies residues 307–329 (REDRNQRRGGSAFETTFTPVERG). Positions 319–329 (FETTFTPVERG) are enriched in polar residues.

In terms of biological role, argR could be a transcriptional activator of the dauBAR operon in response to the presence of L-Arg. The sequence is that of HTH-type transcriptional regulator ArgR (argR) from Pseudomonas aeruginosa (strain ATCC 15692 / DSM 22644 / CIP 104116 / JCM 14847 / LMG 12228 / 1C / PRS 101 / PAO1).